A 326-amino-acid chain; its full sequence is Apoptosis facilitator Bcl-2-like protein 14 (326 aa).

Ser44 carries the phosphoserine modification. Residues 100–147 (AEKEEDSQSSPPEICAQAQRSGVPQARPRSPKWPRSRSSMDQRLEHKA) are disordered. The segment covering 137-147 (SSMDQRLEHKA) has biased composition (basic and acidic residues). The short motif at 211 to 225 (IVELLKYSGEQLERE) is the BH3 element. The BH2 motif lies at 307 to 314 (WIQQHGGW).

Belongs to the Bcl-2 family. In terms of processing, phosphorylated by MELK, leading to inhibit its pro-apoptotic function.

It localises to the cytoplasm. Plays a role in apoptosis. This Bos taurus (Bovine) protein is Apoptosis facilitator Bcl-2-like protein 14 (BCL2L14).